The primary structure comprises 474 residues: MAYSATQSKSGYQAGVKDYRLTYYTPDYTPKDTDVLACFRVTPQPGVPPEEAGAAVAAESSTGTWTTVWTDLLTDLDRYKGRCYDIEPVPGEDNQYFCFVAYPLDLFEEGSVTNMLTSIVGNVFGFKALKALRLEDVRIPVAYLKTFQGPPHGIQVERDKLNKYGRPLLGCTIKPKLGLSAKNYGRAVYEALRGGLDFTKDDENINSQPFQRWRDRYLFVMEAVHKAQAETGEIKGHYLNVTAPTCEEMFKRAEFAKELGAPIIMHDYLTAGFTANTSLAKWCRDNGILLHIHRAMHAVIDRQKNHGIHFRVLAKCLRMSGGDHLHSGTVVGKLEGDRAITMGFVDLMRENYVEADRSRGIFFTQDWASMPGVMPVASGGIHVWHMPALVEIFGDDSVLQFGGGTLGHPWGNAPGATANRVALEACIQARNEGRDLAREGNDIIREAAKWSPELAAACELWKEIKFEFKAVDTL.

Substrate-binding residues include Asn122 and Thr172. Lys174 acts as the Proton acceptor in catalysis. Residue Lys176 participates in substrate binding. Residues Lys200, Asp202, and Glu203 each contribute to the Mg(2+) site. Lys200 carries the post-translational modification N6-carboxylysine. His293 functions as the Proton acceptor in the catalytic mechanism. Residues Arg294, His326, and Ser378 each contribute to the substrate site.

This sequence belongs to the RuBisCO large chain family. Type I subfamily. Heterohexadecamer of 8 large chains and 8 small chains; disulfide-linked. The disulfide link is formed within the large subunit homodimers. Mg(2+) serves as cofactor. Post-translationally, the disulfide bond which can form in the large chain dimeric partners within the hexadecamer appears to be associated with oxidative stress and protein turnover.

It localises to the carboxysome. The enzyme catalyses 2 (2R)-3-phosphoglycerate + 2 H(+) = D-ribulose 1,5-bisphosphate + CO2 + H2O. It carries out the reaction D-ribulose 1,5-bisphosphate + O2 = 2-phosphoglycolate + (2R)-3-phosphoglycerate + 2 H(+). Functionally, ruBisCO catalyzes two reactions: the carboxylation of D-ribulose 1,5-bisphosphate, the primary event in carbon dioxide fixation, as well as the oxidative fragmentation of the pentose substrate in the photorespiration process. Both reactions occur simultaneously and in competition at the same active site. The sequence is that of Ribulose bisphosphate carboxylase large chain from Synechococcus sp. (strain JA-2-3B'a(2-13)) (Cyanobacteria bacterium Yellowstone B-Prime).